A 320-amino-acid chain; its full sequence is Ferrochelatase (320 aa).

Fe cation-binding residues include H194 and E275.

It belongs to the ferrochelatase family.

Its subcellular location is the cytoplasm. The catalysed reaction is heme b + 2 H(+) = protoporphyrin IX + Fe(2+). It participates in porphyrin-containing compound metabolism; protoheme biosynthesis; protoheme from protoporphyrin-IX: step 1/1. Catalyzes the ferrous insertion into protoporphyrin IX. This chain is Ferrochelatase, found in Xylella fastidiosa (strain M12).